The following is a 443-amino-acid chain: MNSTPPTSPVTRVSDGSFPSISNNSKGFAYRQPQKHKSNFAYSHLVSPVEEPTAKFSEAFQTDYSSKAPVATSEAHLKNDLDVLFTTPRFYSPENLALMFRLSNTVSSLEFLDEFLMGILLAPEMDFLSNPSYSLPSNKLVGQGSYSYVYPISSSASSRCNNDSGVVLKFAKSQHKSKVILQEALTLAYLQYMSPSTNESHIIPFYGLTYITKSHFRRLRSNECVPGLILPKCEMSLYHFNTAVSHKLSLITKRKIWWRLMKQMIDALKSLKTNGIIHGDIKTANILITEMHVLNGGHCKDFDFYLADFTSAFHINQTPTDLNTTVEYCAPELIDSSSDHVPTFESDLYAVGLCLLSFISQHEPYNELQALVSHGSSPGIGSSSIQQSQWLINALLKKDPINLNMLRNDLFQDWKSELALLSRILVDRLPLENLITILDSNYI.

The 281-residue stretch at 135–415 (LPSNKLVGQG…LRNDLFQDWK (281 aa)) folds into the Protein kinase domain. Residues 141 to 149 (VGQGSYSYV) and K169 contribute to the ATP site. Catalysis depends on D280, which acts as the Proton acceptor.

The protein belongs to the protein kinase superfamily. Ser/Thr protein kinase family.

The catalysed reaction is L-seryl-[protein] + ATP = O-phospho-L-seryl-[protein] + ADP + H(+). It catalyses the reaction L-threonyl-[protein] + ATP = O-phospho-L-threonyl-[protein] + ADP + H(+). Probable serine/threonine protein kinase which may function redundantly with MPK1-independent branch of the PCK1 pathway that is presumed to be required for the tolerance to high temperatures and staurosporine. The polypeptide is Serine/threonine-protein kinase ISR1 (ISR1) (Saccharomyces cerevisiae (strain ATCC 204508 / S288c) (Baker's yeast)).